Reading from the N-terminus, the 165-residue chain is Deoxyuridine 5'-triphosphate nucleotidohydrolase (165 aa).

It belongs to the dUTPase family. Homotrimer. It depends on Mg(2+) as a cofactor.

It is found in the host cytoplasm. Its subcellular location is the virion. It carries out the reaction dUTP + H2O = dUMP + diphosphate + H(+). In terms of biological role, the viral dUTPase may play a role in lowering the dUTP concentration in natural infections to minimize misincorporation of deoxyuridine into the viral DNA and ensure the fidelity of genome replication. This African swine fever virus (isolate Tick/South Africa/Pretoriuskop Pr4/1996) (ASFV) protein is Deoxyuridine 5'-triphosphate nucleotidohydrolase.